We begin with the raw amino-acid sequence, 115 residues long: Ig kappa chain V region 3315 (115 aa).

The interval 1–24 (AQIVMTQTPSSVSAAVGGTVTINC) is framework-1. Positions 25-37 (QSSQSVYENGRLS) are complementarity-determining-1. Positions 38-52 (WFQQKPGQPPKRLIY) are framework-2. Residues 53 to 59 (RASTLAS) form a complementarity-determining-2 region. The segment at 60 to 91 (GVSSRFTGSGSGTQFTLSISDVQCDDAATYYC) is framework-3. The tract at residues 92-104 (LGNYDCSSGDSFT) is complementarity-determining-3. The interval 105–114 (FGGGTEVVVK) is framework-4.

The protein is Ig kappa chain V region 3315 of Oryctolagus cuniculus (Rabbit).